Reading from the N-terminus, the 130-residue chain is MARVTVEDCIDKVDNRFDLVLLAAHRARMISSGSQLTIDRDNDKNPVVALREIAEQTISPEDMREELVHSLQKFVEVDEPESDTVPLIGSAGASVDADDTEVAVERMTEEELLKGLEGLAPPEEQPEEDE.

Disordered regions lie at residues 79–98 and 108–130; these read EPES…VDAD and TEEE…EEDE.

Belongs to the RNA polymerase subunit omega family. As to quaternary structure, the RNAP catalytic core consists of 2 alpha, 1 beta, 1 beta' and 1 omega subunit. When a sigma factor is associated with the core the holoenzyme is formed, which can initiate transcription.

The catalysed reaction is RNA(n) + a ribonucleoside 5'-triphosphate = RNA(n+1) + diphosphate. Its function is as follows. Promotes RNA polymerase assembly. Latches the N- and C-terminal regions of the beta' subunit thereby facilitating its interaction with the beta and alpha subunits. This chain is DNA-directed RNA polymerase subunit omega, found in Nitrobacter winogradskyi (strain ATCC 25391 / DSM 10237 / CIP 104748 / NCIMB 11846 / Nb-255).